A 527-amino-acid polypeptide reads, in one-letter code: Probable bifunctional tRNA threonylcarbamoyladenosine biosynthesis protein (527 aa).

A kae1 region spans residues 1–323 (MPDIMPDDGL…YRADEVEVAW (323 aa)). The Fe cation site is built by histidine 110, histidine 114, and tyrosine 131. L-threonylcarbamoyladenylate is bound by residues 131-135 (YASGA), aspartate 163, glycine 176, glutamate 180, and asparagine 256. Aspartate 284 provides a ligand contact to Fe cation. Residues 333-527 (IGPHEGGVAR…HEVELRGRYL (195 aa)) enclose the Protein kinase domain. Residues 340–348 (VARGAEAVV) and lysine 357 each bind ATP. Catalysis depends on aspartate 444, which acts as the Proton acceptor; for kinase activity.

The protein in the N-terminal section; belongs to the KAE1 / TsaD family. It in the C-terminal section; belongs to the protein kinase superfamily. Tyr protein kinase family. BUD32 subfamily. Component of the KEOPS complex that consists of Kae1, Bud32, Cgi121 and Pcc1; the whole complex dimerizes. Requires Fe(2+) as cofactor.

Its subcellular location is the cytoplasm. The enzyme catalyses L-seryl-[protein] + ATP = O-phospho-L-seryl-[protein] + ADP + H(+). The catalysed reaction is L-threonyl-[protein] + ATP = O-phospho-L-threonyl-[protein] + ADP + H(+). It catalyses the reaction L-threonylcarbamoyladenylate + adenosine(37) in tRNA = N(6)-L-threonylcarbamoyladenosine(37) in tRNA + AMP + H(+). In terms of biological role, required for the formation of a threonylcarbamoyl group on adenosine at position 37 (t(6)A37) in tRNAs that read codons beginning with adenine. Is a component of the KEOPS complex that is probably involved in the transfer of the threonylcarbamoyl moiety of threonylcarbamoyl-AMP (TC-AMP) to the N6 group of A37. The Kae1 domain likely plays a direct catalytic role in this reaction. The Bud32 domain probably displays kinase activity that regulates Kae1 function. This Methanoculleus marisnigri (strain ATCC 35101 / DSM 1498 / JR1) protein is Probable bifunctional tRNA threonylcarbamoyladenosine biosynthesis protein.